A 682-amino-acid polypeptide reads, in one-letter code: Probable xyloglucan glycosyltransferase 6 (682 aa).

2 helical membrane-spanning segments follow: residues 109-129 and 173-193; these read LIKG…AAYF and IVLF…CFWI. Residue D260 is part of the active site. 2 residues coordinate substrate: D319 and D321. D413 is an active-site residue. A run of 2 helical transmembrane segments spans residues 491–511 and 516–536; these read LILP…TMFF and LPSW…IIPA. Residue S608 is modified to Phosphoserine. The next 2 helical transmembrane spans lie at 632–651 and 657–677; these read LYRT…VRSL and IHFY…LDLI.

Belongs to the glycosyltransferase 2 family. Plant cellulose synthase-like C subfamily. Homodimer. Mainly expressed in flowers and seeds, and, to a lower extent, in seedlings, roots, leaves and stems.

It is found in the golgi apparatus membrane. Probable beta-1,4-glucan synthase rather involved in the synthesis of the xyloglucan backbone than cellulose. Seems to work simultaneously with xyloglucan 6-xylosyltransferase. Xyloglucan is a noncellulosic polysaccharides of plant cell wall and consists of a glucan backbone substituted by xylose, galactose and fucose. In Arabidopsis thaliana (Mouse-ear cress), this protein is Probable xyloglucan glycosyltransferase 6.